A 326-amino-acid polypeptide reads, in one-letter code: tRNA-modifying protein YgfZ (326 aa).

Folate is bound by residues W27 and W189.

This sequence belongs to the tRNA-modifying YgfZ family.

Its subcellular location is the cytoplasm. Functionally, folate-binding protein involved in regulating the level of ATP-DnaA and in the modification of some tRNAs. It is probably a key factor in regulatory networks that act via tRNA modification, such as initiation of chromosomal replication. This is tRNA-modifying protein YgfZ from Shigella boydii serotype 4 (strain Sb227).